A 918-amino-acid polypeptide reads, in one-letter code: Glutamate receptor 2.5 (918 aa).

Positions M1–S30 are cleaved as a signal peptide. Over Q31 to E586 the chain is Extracellular. N46, N58, N122, N336, N340, and N546 each carry an N-linked (GlcNAc...) asparagine glycan. A helical transmembrane segment spans residues L587 to Y607. Over Q608–Q616 the chain is Cytoplasmic. Residues M617–H637 traverse the membrane as a helical segment. Over R638–R647 the chain is Cytoplasmic. Residues V648–L668 form a helical membrane-spanning segment. Topologically, residues T669–S828 are extracellular. Residue N791 is glycosylated (N-linked (GlcNAc...) asparagine). The chain crosses the membrane as a helical span at residues F829–A849. Residues S850–A918 lie on the Cytoplasmic side of the membrane. The disordered stretch occupies residues Q857–N881. Positions N866–N881 are enriched in low complexity.

It belongs to the glutamate-gated ion channel (TC 1.A.10.1) family. As to quaternary structure, may form heteromers. In terms of tissue distribution, expressed predominantly in roots.

The protein resides in the membrane. In terms of biological role, glutamate-gated receptor that probably acts as a non-selective cation channel. May be involved in light-signal transduction and calcium homeostasis via the regulation of calcium influx into cells. The protein is Glutamate receptor 2.5 (GLR2.5) of Arabidopsis thaliana (Mouse-ear cress).